The following is a 448-amino-acid chain: Solute carrier family 52, riboflavin transporter, member 1 (448 aa).

The next 5 helical transmembrane spans lie at 14–34, 47–67, 79–99, 124–144, and 147–167; these read LLVA…WVEL, LPSY…VVTL, VPIQ…APLW, ACCT…PPFL, and FFLG…VQGV. Asn-178 carries N-linked (GlcNAc...) asparagine glycosylation. Residues 191 to 211 traverse the membrane as a helical segment; that stretch reads FPASTFFWALTALLVTSAAAF. The interval 225–267 is disordered; it reads TTGGSGPELQLGSPGAEEEEKEEEEALPLQEPPSQAAGTIPGP. Over residues 240 to 250 the composition is skewed to acidic residues; sequence AEEEEKEEEEA. The next 5 helical transmembrane spans lie at 280-300, 315-335, 342-362, 369-389, and 407-427; these read AFLL…LPSV, LAVV…MGVL, LVGL…LAIL, VGTT…LCVF, and ALLA…GAMF.

This sequence belongs to the riboflavin transporter family. As to expression, widely expressed. Highly expressed in the testis, placenta and small intestine. Expressed at lower level in other tissues.

Its subcellular location is the cell membrane. The catalysed reaction is riboflavin(in) = riboflavin(out). With respect to regulation, the activity is strongly inhibited by riboflavin analogs, such as lumiflavin. Weakly inhibited by flavin adenine dinucleotide (FAD). Its function is as follows. Plasma membrane transporter mediating the uptake by cells of the water soluble vitamin B2/riboflavin that plays a key role in biochemical oxidation-reduction reactions of the carbohydrate, lipid, and amino acid metabolism. Humans are unable to synthesize vitamin B2/riboflavin and must obtain it via intestinal absorption. Functionally, (Microbial infection) May function as a cell receptor to retroviral envelopes similar to the porcine endogenous retrovirus (PERV-A). This is Solute carrier family 52, riboflavin transporter, member 1 from Homo sapiens (Human).